We begin with the raw amino-acid sequence, 87 residues long: Beta-defensin 109 (87 aa).

The first 22 residues, 1–22 (MRLHLLLLILLLFSILLSPVRG), serve as a signal peptide directing secretion. Cystine bridges form between Cys-31–Cys-59, Cys-38–Cys-53, and Cys-43–Cys-60.

It belongs to the beta-defensin family.

Its subcellular location is the secreted. Has antibacterial activity. This is Beta-defensin 109 (DEFB109) from Pan troglodytes (Chimpanzee).